Consider the following 240-residue polypeptide: Glutathione S-transferase theta-1 (240 aa).

The 81-residue stretch at 2-82 (GLELYLDLLS…YLTRKYKVPD (81 aa)) folds into the GST N-terminal domain. Glutathione-binding positions include His-40, 53 to 54 (KV), and 66 to 67 (ES). A GST C-terminal domain is found at 88 to 220 (DLQARARVDE…HEVILKAKDF (133 aa)).

Belongs to the GST superfamily. Theta family. Homodimer. Found in erythrocyte. Expressed at low levels in liver. In lung, expressed at low levels in club cells and ciliated cells at the alveolar/bronchiolar junction. Absent from epithelial cells of larger bronchioles.

It is found in the cytoplasm. The catalysed reaction is RX + glutathione = an S-substituted glutathione + a halide anion + H(+). Conjugation of reduced glutathione to a wide number of exogenous and endogenous hydrophobic electrophiles. Acts on 1,2-epoxy-3-(4-nitrophenoxy)propane, phenethylisothiocyanate 4-nitrobenzyl chloride and 4-nitrophenethyl bromide. Displays glutathione peroxidase activity with cumene hydroperoxide. This chain is Glutathione S-transferase theta-1 (GSTT1), found in Homo sapiens (Human).